Here is a 165-residue protein sequence, read N- to C-terminus: Large ribosomal subunit protein uL10 (165 aa).

Belongs to the universal ribosomal protein uL10 family. Part of the ribosomal stalk of the 50S ribosomal subunit. The N-terminus interacts with L11 and the large rRNA to form the base of the stalk. The C-terminus forms an elongated spine to which L12 dimers bind in a sequential fashion forming a multimeric L10(L12)X complex.

Forms part of the ribosomal stalk, playing a central role in the interaction of the ribosome with GTP-bound translation factors. This is Large ribosomal subunit protein uL10 from Burkholderia thailandensis (strain ATCC 700388 / DSM 13276 / CCUG 48851 / CIP 106301 / E264).